A 551-amino-acid polypeptide reads, in one-letter code: Vacuolar protein sorting-associated protein 17 (551 aa).

A disordered region spans residues 1–100; the sequence is MTSAVPYDPY…SERVILPERS (100 aa). Composition is skewed to polar residues over residues 29 to 39 and 46 to 64; these read AATTTDGSSSM and TEQT…NIQN. Positions 108–227 constitute a PX domain; it reads LLAKVTGLER…FFIESDFNTY (120 aa). Residues 359–385 adopt a coiled-coil conformation; that stretch reads IMRNLVQAQQNSKAKQEQARRFRSRRD. The disordered stretch occupies residues 474-504; the sequence is RLGRHAVSNNNSDTSQTLKGDSWTGESNRKS. A compositionally biased stretch (polar residues) spans 480–504; it reads VSNNNSDTSQTLKGDSWTGESNRKS. Residue serine 544 is modified to Phosphoserine.

This sequence belongs to the VPS17 family. In terms of assembly, component of the retromer complex which consists of VPS29, VPS26, VPS35, VPS5 and VPS17. Component of a retromer subcomplex consisting of VPS5 and VPS17. In terms of processing, phosphorylated on one or more serine residues.

Its subcellular location is the endomembrane system. In terms of biological role, component of the membrane-associated retromer complex which is essential in endosome-to-Golgi retrograde transport. The VPS5-VPS17 subcomplex may assemble onto the membrane to promote vesicle formation and is required for recycling the vacuolar protein-sorting receptor. Required for the sorting and delivery of a subset of soluble vacuolar hydrolases. Required for retention of late Golgi membrane proteins and vacuolar biogenesis. Involved in vacuolar fragmentation during hyperosmotic stress. The protein is Vacuolar protein sorting-associated protein 17 of Saccharomyces cerevisiae (strain ATCC 204508 / S288c) (Baker's yeast).